We begin with the raw amino-acid sequence, 312 residues long: Salivary protein SG34 (312 aa).

The N-terminal stretch at 1-20 is a signal peptide; the sequence is MSPSKKILVLLLFPILLVSS. Positions 95-158 form a coiled coil; sequence NMEVQLLRES…QEEIEEQTKQ (64 aa).

This sequence belongs to the salivary protein SG34 family. Female salivary gland (at protein level). Low-level expression in ovary.

Possible serine protease. Functionally, (Microbial infection) Modulates replication of duck Tembusu virus in salivary glands and virus release into the saliva, probably via the regulation of antimicrobial peptides expression in response to virus infection. In terms of biological role, (Microbial infection) Enhances replication of dengue virus type 2 in human keratinocytes, probably by suppressing the production of type I interferons and antimicrobial peptides in response to virus infection. This chain is Salivary protein SG34, found in Aedes aegypti (Yellowfever mosquito).